The primary structure comprises 1096 residues: Lysine-specific demethylase 4B (1096 aa).

Residues 15 to 57 (IMTFRPTMEEFKDFNKYVAYIESQGAHRAGLAKIIPPKEWKPR) form the JmjN domain. Tyrosine 133 is a binding site for 2-oxoglutarate. The JmjC domain maps to 146 to 309 (VAQWNIGSLR…YGKVATQCTC (164 aa)). Fe cation-binding residues include histidine 189 and glutamate 191. Positions 199 and 207 each coordinate 2-oxoglutarate. Zn(2+)-binding residues include cysteine 235 and histidine 241. Residue lysine 242 coordinates 2-oxoglutarate. Residue histidine 277 coordinates Fe cation. Zn(2+)-binding residues include cysteine 307 and cysteine 309. The span at 369–382 (LLRRSHRKRSQPKK) shows a compositional bias: basic residues. 2 disordered regions span residues 369–478 (LLRR…SEEA) and 557–649 (KGPT…VSDP). Low complexity predominate over residues 391–406 (PGEGTAGAALLEEAGG). Residues 413–425 (GPEVDPEEEEEEP) show a composition bias toward acidic residues. The segment covering 430 to 443 (HGREAEGAEEDGRG) has biased composition (basic and acidic residues). Positions 444 to 458 (KLRPTKAKSERKKKS) are enriched in basic residues. Serine 566 bears the Phosphoserine mark. Lysine 602 carries the N6-acetyllysine modification. Acidic residues predominate over residues 632–648 (SSDEEASPFSGEEDVSD). Residues 731–789 (MCFTSGGENTEPLPANSYIGDDGTSPLIACGKCCLQVHASCYGIRPELVNEGWTCSRCA) form a PHD-type 1 zinc finger. Residues 794 to 827 (TAECCLCNLRGGALQMTTDRRWIHVICAIAVPEA) form a C2HC pre-PHD-type zinc finger. The segment at 850–907 (LKCVYCRKRMKKVSGACIQCSYEHCSTSFHVTCAHAAGVLMEPDDWPYVVSITCLKHK) adopts a PHD-type 2 zinc-finger fold. 2 consecutive Tudor domains span residues 917-974 (RAVS…CVQL) and 975-1031 (GPPS…EELP). Residues 1037–1073 (RLSLSTGAPQEPAFSGEEAKAAKRPRVGTPLATEDSG) form a disordered region. Threonine 1065 is subject to Phosphothreonine.

This sequence belongs to the JHDM3 histone demethylase family. The cofactor is Fe(2+).

The protein localises to the nucleus. It carries out the reaction N(6),N(6),N(6)-trimethyl-L-lysyl(9)-[histone H3] + 2 2-oxoglutarate + 2 O2 = N(6)-methyl-L-lysyl(9)-[histone H3] + 2 formaldehyde + 2 succinate + 2 CO2. Histone demethylase that specifically demethylates 'Lys-9' of histone H3, thereby playing a role in histone code. Does not demethylate histone H3 'Lys-4', H3 'Lys-27', H3 'Lys-36' nor H4 'Lys-20'. Only able to demethylate trimethylated H3 'Lys-9', with a weaker activity than KDM4A, KDM4C and KDM4D. Demethylation of Lys residue generates formaldehyde and succinate. Plays a critical role in the development of the central nervous system (CNS). This is Lysine-specific demethylase 4B (KDM4B) from Homo sapiens (Human).